The sequence spans 94 residues: Small ribosomal subunit protein uS19 (94 aa).

The protein belongs to the universal ribosomal protein uS19 family.

In terms of biological role, protein S19 forms a complex with S13 that binds strongly to the 16S ribosomal RNA. This Clostridium botulinum (strain Langeland / NCTC 10281 / Type F) protein is Small ribosomal subunit protein uS19.